The following is a 511-amino-acid chain: Sodium/proline symporter (511 aa).

13 helical membrane-spanning segments follow: residues 16–36, 54–74, 85–105, 139–159, 175–195, 199–219, 246–266, 284–304, 327–347, 381–401, 407–427, 438–458, and 467–487; these read WQTYVMIIVYFIILLIIGFYG, IGPYITALSAGASDMSGWMIM, LSAIWITIGLTLGAYINYFVV, IISGLIIVVFFTLYTHSGFVS, GLLIVAIIVIFYTFFGGYLAV, DFFQGVIMLIAMVMVPIVALL, VLGIVSLFSWGLGYFGQPHII, LGISWMAVGLLGAIGVGLTGI, ILFHPLVGGFLLAAILAAIMS, FVLIGRLSVLLVAIVAITIAW, ILNLVGNAWAGFGAAFSPLVL, AGAISGMVAGAVVVIVWISWI, and FFGMYEIIPGFIVSVLITYIV.

Belongs to the sodium:solute symporter (SSF) (TC 2.A.21) family.

It localises to the cell membrane. The catalysed reaction is L-proline(in) + Na(+)(in) = L-proline(out) + Na(+)(out). Functionally, catalyzes the sodium-dependent uptake of extracellular L-proline. This chain is Sodium/proline symporter (putP), found in Staphylococcus epidermidis (strain ATCC 35984 / DSM 28319 / BCRC 17069 / CCUG 31568 / BM 3577 / RP62A).